The sequence spans 690 residues: Lipase 2 (690 aa).

The signal sequence occupies residues 1-37 (MLRGQEERKYSIRKYSIGVVSVLAATMFVVSSHEAQA). A compositionally biased stretch (polar residues) spans 52–71 (LNQPGEQGNAITSHQMQSGK). The interval 52–266 (LNQPGEQGNA…KPTDKNTDNK (215 aa)) is disordered. The span at 72–81 (QLDDMHKENG) shows a compositional bias: basic and acidic residues. 3 stretches are compositionally biased toward polar residues: residues 82-114 (KSGT…NDNQ), 124-171 (SKQS…QPSI), and 185-206 (PTST…AQDA). 2 stretches are compositionally biased toward basic and acidic residues: residues 225-237 (IDAK…RQSE) and 257-266 (KPTDKNTDNK). Residues S412 and H645 each act as charge relay system in the active site.

It belongs to the AB hydrolase superfamily. Lipase family.

The protein localises to the secreted. The enzyme catalyses a triacylglycerol + H2O = a diacylglycerol + a fatty acid + H(+). The polypeptide is Lipase 2 (lip2) (Staphylococcus aureus (strain NCTC 8325 / PS 47)).